Reading from the N-terminus, the 273-residue chain is Shikimate dehydrogenase (NADP(+)) (273 aa).

Shikimate-binding positions include 15 to 17 (SKS) and threonine 62. The active-site Proton acceptor is lysine 66. Residue aspartate 78 participates in NADP(+) binding. Residues asparagine 87 and aspartate 103 each coordinate shikimate. Residues 127-131 (GAGGA), 150-155 (NRTHTR), alanine 218, and glycine 238 each bind NADP(+).

This sequence belongs to the shikimate dehydrogenase family. In terms of assembly, homodimer.

It carries out the reaction shikimate + NADP(+) = 3-dehydroshikimate + NADPH + H(+). It functions in the pathway metabolic intermediate biosynthesis; chorismate biosynthesis; chorismate from D-erythrose 4-phosphate and phosphoenolpyruvate: step 4/7. In terms of biological role, involved in the biosynthesis of the chorismate, which leads to the biosynthesis of aromatic amino acids. Catalyzes the reversible NADPH linked reduction of 3-dehydroshikimate (DHSA) to yield shikimate (SA). This Yersinia pseudotuberculosis serotype O:1b (strain IP 31758) protein is Shikimate dehydrogenase (NADP(+)).